Here is a 141-residue protein sequence, read N- to C-terminus: MPPKFKRHLNDDDVTGSVKSERRNLLEDDSDEEEDFFLRGPSGPRFGPRNDKIKHVQNQVDEVIDVMQENITKVIERGERLDELQDKSESLSDNATAFSNRSKQLRRQMWWRGCKIKAIMALVAAILLLVIIILIVMKYRT.

The disordered stretch occupies residues 1 to 51 (MPPKFKRHLNDDDVTGSVKSERRNLLEDDSDEEEDFFLRGPSGPRFGPRND). Residues 1 to 115 (MPPKFKRHLN…RRQMWWRGCK (115 aa)) lie on the Cytoplasmic side of the membrane. Phosphoserine occurs at positions 17 and 30. The region spanning 52 to 112 (KIKHVQNQVD…KQLRRQMWWR (61 aa)) is the v-SNARE coiled-coil homology domain. A helical; Anchor for type IV membrane protein membrane pass occupies residues 116 to 136 (IKAIMALVAAILLLVIIILIV). The Vesicular segment spans residues 137-141 (MKYRT).

It belongs to the synaptobrevin family. As to quaternary structure, identified in a complex containing STX6, STX12, VAMP4 and VTI1A. Interacts with BAIAP3; this interaction is increased in the presence of calcium.

Its subcellular location is the golgi apparatus. The protein localises to the trans-Golgi network membrane. Involved in the pathway that functions to remove an inhibitor (probably synaptotagmin-4) of calcium-triggered exocytosis during the maturation of secretory granules. May be a marker for this sorting pathway that is critical for remodeling the secretory response of granule. The sequence is that of Vesicle-associated membrane protein 4 (VAMP4) from Homo sapiens (Human).